The sequence spans 345 residues: Phosphoribosylformylglycinamidine cyclo-ligase (345 aa).

It belongs to the AIR synthase family.

It localises to the cytoplasm. The catalysed reaction is 2-formamido-N(1)-(5-O-phospho-beta-D-ribosyl)acetamidine + ATP = 5-amino-1-(5-phospho-beta-D-ribosyl)imidazole + ADP + phosphate + H(+). Its pathway is purine metabolism; IMP biosynthesis via de novo pathway; 5-amino-1-(5-phospho-D-ribosyl)imidazole from N(2)-formyl-N(1)-(5-phospho-D-ribosyl)glycinamide: step 2/2. The polypeptide is Phosphoribosylformylglycinamidine cyclo-ligase (Lactobacillus acidophilus (strain ATCC 700396 / NCK56 / N2 / NCFM)).